A 709-amino-acid polypeptide reads, in one-letter code: F-box only protein 40 (709 aa).

Residues 53–112 (EHQLLCPLEQVPCLNSEYGCPLSMSRHKLAKHLQVCPASVVCCSMEWNRWPNVDSETTLH) form a TRAF-type zinc finger. Positions 232–280 (TNSSASCESKNKNDSEKEQISSGHNMVEGEGAPKKKEPQENQKQQDVRT) are disordered. Basic and acidic residues-rich tracts occupy residues 240 to 250 (SKNKNDSEKEQ) and 262 to 277 (GAPKKKEPQENQKQQD). In terms of domain architecture, F-box spans 570–624 (QNSLTSLPLEILKYIAGFLDSVSLAQLSQVSVLMRNICATLLQERGMVLLQWKKK).

In terms of assembly, directly interacts with SKP1 and CUL1. As to expression, expressed only in heart and skeletal muscle.

The protein resides in the cytoplasm. In terms of biological role, probable substrate-recognition component of the SCF (SKP1-CUL1-F-box protein)-type E3 ubiquitin ligase complex that may function in myogenesis. The protein is F-box only protein 40 (FBXO40) of Homo sapiens (Human).